The chain runs to 329 residues: GMP reductase (329 aa).

Cysteine 178 acts as the Thioimidate intermediate in catalysis. 207–230 serves as a coordination point for NADP(+); sequence IIADGGIRNNGDIAKSIRFGATMC.

The protein belongs to the IMPDH/GMPR family. GuaC type 2 subfamily.

The catalysed reaction is IMP + NH4(+) + NADP(+) = GMP + NADPH + 2 H(+). Functionally, catalyzes the irreversible NADPH-dependent deamination of GMP to IMP. It functions in the conversion of nucleobase, nucleoside and nucleotide derivatives of G to A nucleotides, and in maintaining the intracellular balance of A and G nucleotides. In Lacticaseibacillus casei (strain BL23) (Lactobacillus casei), this protein is GMP reductase.